The following is a 179-amino-acid chain: Large ribosomal subunit protein uL5 (179 aa).

It belongs to the universal ribosomal protein uL5 family. Part of the 50S ribosomal subunit; part of the 5S rRNA/L5/L18/L25 subcomplex. Contacts the 5S rRNA and the P site tRNA. Forms a bridge to the 30S subunit in the 70S ribosome.

This is one of the proteins that bind and probably mediate the attachment of the 5S RNA into the large ribosomal subunit, where it forms part of the central protuberance. In the 70S ribosome it contacts protein S13 of the 30S subunit (bridge B1b), connecting the 2 subunits; this bridge is implicated in subunit movement. Contacts the P site tRNA; the 5S rRNA and some of its associated proteins might help stabilize positioning of ribosome-bound tRNAs. This chain is Large ribosomal subunit protein uL5, found in Prochlorococcus marinus (strain MIT 9312).